The chain runs to 150 residues: Putative HTH-type transcriptional regulator rrf2-like (150 aa).

The HTH rrf2-type domain maps to 1–139; the sequence is MITQKMKYAL…DSLTLEDMLA (139 aa).

The protein is Putative HTH-type transcriptional regulator rrf2-like of Rhodobacter capsulatus (strain ATCC BAA-309 / NBRC 16581 / SB1003).